The following is a 310-amino-acid chain: AA9 family lytic polysaccharide monooxygenase A (310 aa).

An N-terminal signal peptide occupies residues 1-21 (MPSTKVAALSAVLALASTVAG). The Cu(2+) site is built by His-22 and His-107. Cystine bridges form between Cys-77–Cys-199 and Cys-118–Cys-122. 2 N-linked (GlcNAc...) asparagine glycosylation sites follow: Asn-121 and Asn-159. His-185 contributes to the O2 binding site. Tyr-196 is a binding site for Cu(2+).

Belongs to the polysaccharide monooxygenase AA9 family. Cu(2+) serves as cofactor.

Its subcellular location is the secreted. The enzyme catalyses [(1-&gt;4)-beta-D-glucosyl]n+m + reduced acceptor + O2 = 4-dehydro-beta-D-glucosyl-[(1-&gt;4)-beta-D-glucosyl]n-1 + [(1-&gt;4)-beta-D-glucosyl]m + acceptor + H2O.. Functionally, lytic polysaccharide monooxygenase (LPMO) that depolymerizes crystalline and amorphous polysaccharides via the oxidation of scissile alpha- or beta-(1-4)-glycosidic bonds, yielding C1, C4 as well as C6 oxidation products. Catalysis by LPMOs requires the reduction of the active-site copper from Cu(II) to Cu(I) by a reducing agent and H(2)O(2) or O(2) as a cosubstrate. Active on cellulose, but not on xylan, starch, or chitin. This is AA9 family lytic polysaccharide monooxygenase A from Talaromyces pinophilus (Penicillium pinophilum).